Here is a 199-residue protein sequence, read N- to C-terminus: Dephospho-CoA kinase (199 aa).

Residues 3–199 (ILGLTGSIGM…ATAKMPQRRA (197 aa)) enclose the DPCK domain. 11-16 (GMGKST) serves as a coordination point for ATP.

It belongs to the CoaE family.

The protein localises to the cytoplasm. The enzyme catalyses 3'-dephospho-CoA + ATP = ADP + CoA + H(+). The protein operates within cofactor biosynthesis; coenzyme A biosynthesis; CoA from (R)-pantothenate: step 5/5. Functionally, catalyzes the phosphorylation of the 3'-hydroxyl group of dephosphocoenzyme A to form coenzyme A. The polypeptide is Dephospho-CoA kinase (Rhodopseudomonas palustris (strain BisB18)).